Here is a 139-residue protein sequence, read N- to C-terminus: MLKEFREFAMKGNVVDLAVAVIIGAAFGAIVSSMVADVIMPIIGAVTGGLDFSNYFTGLSKTVTATNLADAKKQGAVLAWGNFLTLTLNFLIVAFVLFMVVRFMSKLKRKDEAAPAAPPKPTREEELLTEIRDLLKTKK.

2 helical membrane-spanning segments follow: residues 19 to 39 (VAVIIGAAFGAIVSSMVADVI) and 81 to 101 (GNFLTLTLNFLIVAFVLFMVV).

This sequence belongs to the MscL family. Homopentamer.

It is found in the cell inner membrane. In terms of biological role, channel that opens in response to stretch forces in the membrane lipid bilayer. May participate in the regulation of osmotic pressure changes within the cell. The polypeptide is Large-conductance mechanosensitive channel (Nitrobacter hamburgensis (strain DSM 10229 / NCIMB 13809 / X14)).